We begin with the raw amino-acid sequence, 462 residues long: L-seryl-tRNA(Sec) selenium transferase (462 aa).

Residue K292 is modified to N6-(pyridoxal phosphate)lysine.

It belongs to the SelA family. The cofactor is pyridoxal 5'-phosphate.

Its subcellular location is the cytoplasm. It carries out the reaction L-seryl-tRNA(Sec) + selenophosphate + H(+) = L-selenocysteinyl-tRNA(Sec) + phosphate. The protein operates within aminoacyl-tRNA biosynthesis; selenocysteinyl-tRNA(Sec) biosynthesis; selenocysteinyl-tRNA(Sec) from L-seryl-tRNA(Sec) (bacterial route): step 1/1. In terms of biological role, converts seryl-tRNA(Sec) to selenocysteinyl-tRNA(Sec) required for selenoprotein biosynthesis. The protein is L-seryl-tRNA(Sec) selenium transferase of Geobacter sulfurreducens (strain ATCC 51573 / DSM 12127 / PCA).